We begin with the raw amino-acid sequence, 140 residues long: Nucleoside diphosphate kinase (140 aa).

Residues lysine 11, phenylalanine 59, arginine 87, threonine 93, arginine 104, and asparagine 114 each contribute to the ATP site. Histidine 117 functions as the Pros-phosphohistidine intermediate in the catalytic mechanism.

This sequence belongs to the NDK family. As to quaternary structure, homotetramer. Mg(2+) serves as cofactor.

It localises to the cytoplasm. It carries out the reaction a 2'-deoxyribonucleoside 5'-diphosphate + ATP = a 2'-deoxyribonucleoside 5'-triphosphate + ADP. The enzyme catalyses a ribonucleoside 5'-diphosphate + ATP = a ribonucleoside 5'-triphosphate + ADP. Its function is as follows. Major role in the synthesis of nucleoside triphosphates other than ATP. The ATP gamma phosphate is transferred to the NDP beta phosphate via a ping-pong mechanism, using a phosphorylated active-site intermediate. This chain is Nucleoside diphosphate kinase, found in Methylorubrum extorquens (strain CM4 / NCIMB 13688) (Methylobacterium extorquens).